A 351-amino-acid chain; its full sequence is UDP-N-acetylglucosamine--N-acetylmuramyl-(pentapeptide) pyrophosphoryl-undecaprenol N-acetylglucosamine transferase (351 aa).

Residues 13–15 (TGG), Asn125, Arg161, Ser189, Ile241, 260–265 (ALTVCE), and Gln285 contribute to the UDP-N-acetyl-alpha-D-glucosamine site.

Belongs to the glycosyltransferase 28 family. MurG subfamily.

It localises to the cell inner membrane. It carries out the reaction di-trans,octa-cis-undecaprenyl diphospho-N-acetyl-alpha-D-muramoyl-L-alanyl-D-glutamyl-meso-2,6-diaminopimeloyl-D-alanyl-D-alanine + UDP-N-acetyl-alpha-D-glucosamine = di-trans,octa-cis-undecaprenyl diphospho-[N-acetyl-alpha-D-glucosaminyl-(1-&gt;4)]-N-acetyl-alpha-D-muramoyl-L-alanyl-D-glutamyl-meso-2,6-diaminopimeloyl-D-alanyl-D-alanine + UDP + H(+). Its pathway is cell wall biogenesis; peptidoglycan biosynthesis. Its function is as follows. Cell wall formation. Catalyzes the transfer of a GlcNAc subunit on undecaprenyl-pyrophosphoryl-MurNAc-pentapeptide (lipid intermediate I) to form undecaprenyl-pyrophosphoryl-MurNAc-(pentapeptide)GlcNAc (lipid intermediate II). This chain is UDP-N-acetylglucosamine--N-acetylmuramyl-(pentapeptide) pyrophosphoryl-undecaprenol N-acetylglucosamine transferase, found in Haemophilus influenzae (strain PittEE).